The primary structure comprises 142 residues: Hemoglobin subunit alpha (142 aa).

Residues 2–142 (VLSAADKTNV…LSTVLTSKYR (141 aa)) form the Globin domain. The residue at position 4 (Ser4) is a Phosphoserine. Lys8 carries the N6-succinyllysine modification. Thr9 bears the Phosphothreonine mark. Lys12 is subject to N6-succinyllysine. Lys17 is subject to N6-acetyllysine; alternate. Lys17 is modified (N6-succinyllysine; alternate). Tyr25 carries the phosphotyrosine modification. Ser36 is modified (phosphoserine). Lys41 is modified (N6-succinyllysine). Ser50 carries the post-translational modification Phosphoserine. Gln59 lines the O2 pocket. A heme b-binding site is contributed by His88. Phosphothreonine is present on Thr109. A Phosphoserine modification is found at Ser125. Phosphothreonine occurs at positions 135 and 138. Ser139 carries the post-translational modification Phosphoserine.

Belongs to the globin family. As to quaternary structure, heterotetramer of two alpha chains and two beta chains. Red blood cells.

Its function is as follows. Involved in oxygen transport from the lung to the various peripheral tissues. In terms of biological role, hemopressin acts as an antagonist peptide of the cannabinoid receptor CNR1. Hemopressin-binding efficiently blocks cannabinoid receptor CNR1 and subsequent signaling. The chain is Hemoglobin subunit alpha (HBA) from Monodelphis domestica (Gray short-tailed opossum).